We begin with the raw amino-acid sequence, 75 residues long: DNA-directed RNA polymerase subunit omega (75 aa).

It belongs to the RNA polymerase subunit omega family. The RNAP catalytic core consists of 2 alpha, 1 beta, 1 beta' and 1 omega subunit. When a sigma factor is associated with the core the holoenzyme is formed, which can initiate transcription.

The catalysed reaction is RNA(n) + a ribonucleoside 5'-triphosphate = RNA(n+1) + diphosphate. Functionally, promotes RNA polymerase assembly. Latches the N- and C-terminal regions of the beta' subunit thereby facilitating its interaction with the beta and alpha subunits. The protein is DNA-directed RNA polymerase subunit omega of Lysinibacillus sphaericus (strain C3-41).